Reading from the N-terminus, the 125-residue chain is Fluoride-specific ion channel FluC (125 aa).

The next 4 membrane-spanning stretches (helical) occupy residues Phe-3 to Val-23, Ile-33 to Phe-53, Phe-65 to Tyr-85, and Leu-99 to Leu-119. The Na(+) site is built by Gly-75 and Thr-78.

Belongs to the fluoride channel Fluc/FEX (TC 1.A.43) family.

The protein resides in the cell inner membrane. The enzyme catalyses fluoride(in) = fluoride(out). Na(+) is not transported, but it plays an essential structural role and its presence is essential for fluoride channel function. In terms of biological role, fluoride-specific ion channel. Important for reducing fluoride concentration in the cell, thus reducing its toxicity. The protein is Fluoride-specific ion channel FluC of Thermosipho melanesiensis (strain DSM 12029 / CIP 104789 / BI429).